A 353-amino-acid polypeptide reads, in one-letter code: MTAILERRESTSLWGRFCNWITSTENRLYIGWFGVLMIPTLLTATSVFIIAFIAAPPVDIDGIREPVSGSLLYGNNIISGAIIPTSAAIGLHFYPIWEAASVDEWLYNGGPYELIVLHFLLGVACYMGREWELSFRLGMRPWIAVAYSAPVAAATAVFLIYPIGQGSFSDGMPLGISGTFNFMIVFQAEHNILMHPFHMLGVAGVFGGSLFSAMHGSLVTSSLIRETTENESANEGYKFGQEEETYNIVAAHGYFGRLIFQYASFNNSRSLHFFLAAWPVVGIWFTALGISTMAFNLNGFNFNQSVVDSQGRVINTWADIINRANLGMEVMHERNAHNFPLDLAALEVPSLNG.

Residue threonine 2 is modified to N-acetylthreonine. Threonine 2 is modified (phosphothreonine). 3 consecutive transmembrane segments (helical) span residues 29–46 (YIGW…TATS), 118–133 (HFLL…EWEL), and 142–156 (WIAV…AATA). Histidine 118 serves as a coordination point for chlorophyll a. Tyrosine 126 provides a ligand contact to pheophytin a. [CaMn4O5] cluster is bound by residues aspartate 170 and glutamate 189. A helical transmembrane segment spans residues 197 to 218 (FHMLGVAGVFGGSLFSAMHGSL). Residue histidine 198 participates in chlorophyll a binding. A quinone is bound by residues histidine 215 and 264–265 (SF). Residue histidine 215 coordinates Fe cation. Residue histidine 272 participates in Fe cation binding. Residues 274–288 (FLAAWPVVGIWFTAL) traverse the membrane as a helical segment. Positions 332, 333, 342, and 344 each coordinate [CaMn4O5] cluster. Positions 345-353 (ALEVPSLNG) are excised as a propeptide.

This sequence belongs to the reaction center PufL/M/PsbA/D family. As to quaternary structure, PSII is composed of 1 copy each of membrane proteins PsbA, PsbB, PsbC, PsbD, PsbE, PsbF, PsbH, PsbI, PsbJ, PsbK, PsbL, PsbM, PsbT, PsbX, PsbY, PsbZ, Psb30/Ycf12, at least 3 peripheral proteins of the oxygen-evolving complex and a large number of cofactors. It forms dimeric complexes. The D1/D2 heterodimer binds P680, chlorophylls that are the primary electron donor of PSII, and subsequent electron acceptors. It shares a non-heme iron and each subunit binds pheophytin, quinone, additional chlorophylls, carotenoids and lipids. D1 provides most of the ligands for the Mn4-Ca-O5 cluster of the oxygen-evolving complex (OEC). There is also a Cl(-1) ion associated with D1 and D2, which is required for oxygen evolution. The PSII complex binds additional chlorophylls, carotenoids and specific lipids. serves as cofactor. In terms of processing, tyr-161 forms a radical intermediate that is referred to as redox-active TyrZ, YZ or Y-Z. Post-translationally, C-terminally processed by CTPA; processing is essential to allow assembly of the oxygen-evolving complex and thus photosynthetic growth.

Its subcellular location is the plastid. It localises to the chloroplast thylakoid membrane. It catalyses the reaction 2 a plastoquinone + 4 hnu + 2 H2O = 2 a plastoquinol + O2. Functionally, photosystem II (PSII) is a light-driven water:plastoquinone oxidoreductase that uses light energy to abstract electrons from H(2)O, generating O(2) and a proton gradient subsequently used for ATP formation. It consists of a core antenna complex that captures photons, and an electron transfer chain that converts photonic excitation into a charge separation. The D1/D2 (PsbA/PsbD) reaction center heterodimer binds P680, the primary electron donor of PSII as well as several subsequent electron acceptors. This chain is Photosystem II protein D1, found in Lolium perenne (Perennial ryegrass).